The chain runs to 734 residues: MVSRFPKFSQGLSQDPTTRRIWFGIATAHDFESHDDTTEERLYQKIFASHFGQLAIIFLWTSGNLFHVAWQGNFETWVQDPLHVRPIAHAIWDPHFGQPAVEAYTRGGSAGPVNIAYSGVYQWWYTIGLRNNEDLYTGAIFLLAVAALFLLASWLHLQPKWKPSISWFKNAESRLNHHLSGLFGVSSLAWTGHLIHVAIPEARGGHVRWNDLLTTAPHPQGLGPFFSGQWSVYSQNPDSNTHLFNSNQGAGTAILTFLGGFHPQTQSLWLTDMAHHHLAIAVVFIIAGHMYRTNFGIGHSMKEILDAHIPPGGKLGRGHRGLYDTVNNSLHFQLGLALAALGVITSLVAQHMYSLPAYAFLAQDYTTQAALYTHHQYIAGFIMAGAFAHGAIFFLRDYDPEQNRDNVLARMLEHKEAIISHLSWASLFLGFHTLGLYVHNDVMLAFGTPEKQILIEPVFAQWIQSAHGKVSYGFDVLLSSVDSPASNAGRGLWLPGWLDAVNSSNNSLFLTIGPGDFLVHHAIALGLHTTTLILVKGALDARGSKLMPDKKEFGYSFPCDGPGRGGTCDISAWDAFYLAVFWMLNTIGWVTFYWHWKHITLWQGNAAQFNESSTYLMGWLRDYLWLNSSQLINGYNPFGMNSLSVWAWMFLFGHLVWATGFMFLISWRGYWQELIETLAWAHERTPLANMIRWKDKPVALSIVQARLVGLAHFSVGYIFTYAAFLIASTSGKFG.

The next 8 membrane-spanning stretches (helical) occupy residues 46-69 (IFAS…FHVA), 135-158 (LYTG…LHLQ), 175-199 (LNHH…HVAI), 273-291 (MAHH…GHMY), 330-353 (LHFQ…QHMY), 369-395 (AALY…IFFL), 417-439 (AIIS…LYVH), and 517-535 (FLVH…LILV). [4Fe-4S] cluster-binding residues include Cys559 and Cys568. 2 helical membrane-spanning segments follow: residues 575–596 (AFYL…YWHW) and 643–665 (LSVW…MFLI). Chlorophyll a is bound by residues His654, Met662, and Tyr670. Trp671 contacts phylloquinone. Residues 707-727 (LVGLAHFSVGYIFTYAAFLIA) traverse the membrane as a helical segment.

Belongs to the PsaA/PsaB family. As to quaternary structure, the PsaA/B heterodimer binds the P700 chlorophyll special pair and subsequent electron acceptors. PSI consists of a core antenna complex that captures photons, and an electron transfer chain that converts photonic excitation into a charge separation. The eukaryotic PSI reaction center is composed of at least 11 subunits. P700 is a chlorophyll a/chlorophyll a' dimer, A0 is one or more chlorophyll a, A1 is one or both phylloquinones and FX is a shared 4Fe-4S iron-sulfur center. is required as a cofactor.

The protein localises to the plastid. It is found in the chloroplast thylakoid membrane. It carries out the reaction reduced [plastocyanin] + hnu + oxidized [2Fe-2S]-[ferredoxin] = oxidized [plastocyanin] + reduced [2Fe-2S]-[ferredoxin]. PsaA and PsaB bind P700, the primary electron donor of photosystem I (PSI), as well as the electron acceptors A0, A1 and FX. PSI is a plastocyanin-ferredoxin oxidoreductase, converting photonic excitation into a charge separation, which transfers an electron from the donor P700 chlorophyll pair to the spectroscopically characterized acceptors A0, A1, FX, FA and FB in turn. Oxidized P700 is reduced on the lumenal side of the thylakoid membrane by plastocyanin. The chain is Photosystem I P700 chlorophyll a apoprotein A2 from Adiantum capillus-veneris (Maidenhair fern).